Here is a 338-residue protein sequence, read N- to C-terminus: Cytoskeleton protein RodZ (338 aa).

The Cytoplasmic portion of the chain corresponds to M1–G111. In terms of domain architecture, HTH cro/C1-type spans L19–L71. Residues Q30 to E49 constitute a DNA-binding region (H-T-H motif). Residues W112–W132 traverse the membrane as a helical; Signal-anchor for type II membrane protein segment. The Periplasmic portion of the chain corresponds to W133–Q338. The segment covering N155–S169 has biased composition (polar residues). Residues N155–P240 form a disordered region. Low complexity predominate over residues T170–A188. Positions E203 to V217 are enriched in polar residues. Low complexity predominate over residues D218–P240.

The protein belongs to the RodZ family.

The protein resides in the cell inner membrane. Its function is as follows. Cytoskeletal protein that is involved in cell-shape control through regulation of the length of the long axis. This is Cytoskeleton protein RodZ from Escherichia fergusonii (strain ATCC 35469 / DSM 13698 / CCUG 18766 / IAM 14443 / JCM 21226 / LMG 7866 / NBRC 102419 / NCTC 12128 / CDC 0568-73).